The chain runs to 834 residues: Taste receptor type 1 member 2 (834 aa).

Residues 1–19 (MGPRARTVCFLFFLLWVLA) form the signal peptide. Residues 20–561 (ELAENSDFHL…SFLEWHEAAT (542 aa)) are Extracellular-facing. N-linked (GlcNAc...) asparagine glycosylation is found at N84, N292, N312, N363, N423, N482, and N522. Residues 562 to 582 (IAVALLAALGFLXXXXXXXXX) form a helical membrane-spanning segment. Topologically, residues 583-597 (XXXXXXPMVRSAGGP) are cytoplasmic. The chain crosses the membrane as a helical span at residues 598 to 618 (MCFLMLTLLLVAYMVVPVYVG). Residues 619–630 (PPKVTTCLCRQA) lie on the Extracellular side of the membrane. A helical transmembrane segment spans residues 631–651 (LFPVCFTICISCITMRSFQIV). At 652–676 (CVFKMASRFPRAYSYWVRYQGSYVS) the chain is on the cytoplasmic side. A helical transmembrane segment spans residues 677–697 (VAFITALKVVTVVISLLATGL). At 698–722 (NPTTRADTDDPKIMIISCNPNYRNS) the chain is on the extracellular side. Residues 723–743 (LLFNTSLDLLLSVVGFSFAYM) form a helical membrane-spanning segment. The Cytoplasmic segment spans residues 744 to 755 (GKELPTNYNEAK). A helical transmembrane segment spans residues 756–776 (FITFSMTFYFTSSVSLCTFMS). The Extracellular segment spans residues 777 to 779 (VYD). A helical membrane pass occupies residues 780 to 800 (GVLVTIVDLLVTVFNLLAISL). Topologically, residues 801–834 (GYFGPKCYMILFYPERNTPAYFNSMIQGYTMRRD) are cytoplasmic.

This sequence belongs to the G-protein coupled receptor 3 family. TAS1R subfamily. In terms of assembly, forms heterodimers with TAS1R3.

It is found in the cell membrane. Its function is as follows. Putative taste receptor. TAS1R2/TAS1R3 recognizes diverse natural and synthetic sweeteners. The chain is Taste receptor type 1 member 2 (TAS1R2) from Cebuella pygmaea (Pygmy marmoset).